The chain runs to 281 residues: CCAAT/enhancer-binding protein epsilon (281 aa).

The disordered stretch occupies residues 1-30 (MSHGTYYECEPRAGQQPLEFSGARAGPGEL). Lys-121 is covalently cross-linked (Glycyl lysine isopeptide (Lys-Gly) (interchain with G-Cter in SUMO2)). A Phosphoserine modification is found at Ser-181. Residues 204–267 (SLEYRLRRER…DTLRNLFRQI (64 aa)) enclose the bZIP domain. Residues 208 to 228 (RLRRERNNIAVRKSRDKAKRR) are basic motif. Positions 230-237 (LETQQKVL) are leucine-zipper.

It belongs to the bZIP family. C/EBP subfamily. Binds DNA as a homodimer and as a heterodimer. Can form stable heterodimers with CEBPA, CEBPB and CEBPD. Interacts with GATA1 and SPI1. Interacts with SMARCD2. In terms of processing, phosphorylated.

It is found in the nucleus. Its function is as follows. Transcriptional activator. C/EBP are DNA-binding proteins that recognize two different motifs: the CCAAT homology common to many promoters and the enhanced core homology common to many enhancers. Required for the promyelocyte-myelocyte transition in myeloid differentiation. This chain is CCAAT/enhancer-binding protein epsilon (CEBPE), found in Ovis aries (Sheep).